A 453-amino-acid chain; its full sequence is Proton extrusion protein PxcA (453 aa).

The interval 147–189 is disordered; sequence SQDKETQTLDNKSTNQTNSKLSNNNKISSGQNDSRLESASQKT. A compositionally biased stretch (polar residues) spans 154-163; that stretch reads TLDNKSTNQT. Residues 164-175 are compositionally biased toward low complexity; the sequence is NSKLSNNNKISS. Residues 176–189 show a composition bias toward polar residues; sequence GQNDSRLESASQKT. The next 4 membrane-spanning stretches (helical) occupy residues 235-255, 330-350, 377-397, and 413-433; these read FILL…TFLL, SIGN…VIVS, LIIL…WEVI, and FNFL…KYWI.

Belongs to the CemA family.

Its subcellular location is the cell inner membrane. Functionally, required for H(+) efflux immediately after light irradiation to form a rapid H(+) concentration gradient across the thylakoid membranes. Together with PxcL, contributes to transient H(+) uptake following dark to light transition. The protein is Proton extrusion protein PxcA of Crocosphaera subtropica (strain ATCC 51142 / BH68) (Cyanothece sp. (strain ATCC 51142)).